Here is a 553-residue protein sequence, read N- to C-terminus: Urocanate hydratase (553 aa).

Residues G51–G52, Q129, G175–G177, E195, R200, N241–A242, Q262–H266, Y272–L273, and Y321 contribute to the NAD(+) site. Residue C409 is part of the active site. G491 lines the NAD(+) pocket.

It belongs to the urocanase family. Requires NAD(+) as cofactor.

Its subcellular location is the cytoplasm. It carries out the reaction 4-imidazolone-5-propanoate = trans-urocanate + H2O. Its pathway is amino-acid degradation; L-histidine degradation into L-glutamate; N-formimidoyl-L-glutamate from L-histidine: step 2/3. In terms of biological role, catalyzes the conversion of urocanate to 4-imidazolone-5-propionate. This Sphingopyxis alaskensis (strain DSM 13593 / LMG 18877 / RB2256) (Sphingomonas alaskensis) protein is Urocanate hydratase.